The primary structure comprises 384 residues: uncharacterized protein (384 aa).

A disordered region spans residues 1-116; it reads MTEMPKKKFS…FPAAPPPMDS (116 aa). 2 stretches are compositionally biased toward basic and acidic residues: residues 14-70 and 78-95; these read ARGD…RAGD and RFKDKDRDKPRYGDDRPR. Positions 318, 338, and 347 each coordinate S-adenosyl-L-methionine.

It belongs to the class IV-like SAM-binding methyltransferase superfamily. RNA methyltransferase TrmH family.

This is an uncharacterized protein from Synechocystis sp. (strain ATCC 27184 / PCC 6803 / Kazusa).